Consider the following 86-residue polypeptide: uncharacterized protein (86 aa).

This is an uncharacterized protein from Dictyostelium discoideum (Social amoeba).